The primary structure comprises 307 residues: Acetyl-coenzyme A carboxylase carboxyl transferase subunit beta (307 aa).

The 270-residue stretch at 28-297 (LWVKCPDTGQ…TPEPGTAPEP (270 aa)) folds into the CoA carboxyltransferase N-terminal domain. The interval 286–307 (RRTPEPGTAPEPTTPEPLPNAA) is disordered. The segment covering 292–307 (GTAPEPTTPEPLPNAA) has biased composition (pro residues).

It belongs to the AccD/PCCB family. In terms of assembly, acetyl-CoA carboxylase is a heterohexamer composed of biotin carboxyl carrier protein (AccB), biotin carboxylase (AccC) and two subunits each of ACCase subunit alpha (AccA) and ACCase subunit beta (AccD).

The protein resides in the cytoplasm. It carries out the reaction N(6)-carboxybiotinyl-L-lysyl-[protein] + acetyl-CoA = N(6)-biotinyl-L-lysyl-[protein] + malonyl-CoA. Its pathway is lipid metabolism; malonyl-CoA biosynthesis; malonyl-CoA from acetyl-CoA: step 1/1. Its function is as follows. Component of the acetyl coenzyme A carboxylase (ACC) complex. Biotin carboxylase (BC) catalyzes the carboxylation of biotin on its carrier protein (BCCP) and then the CO(2) group is transferred by the transcarboxylase to acetyl-CoA to form malonyl-CoA. The protein is Acetyl-coenzyme A carboxylase carboxyl transferase subunit beta of Methylorubrum extorquens (strain ATCC 14718 / DSM 1338 / JCM 2805 / NCIMB 9133 / AM1) (Methylobacterium extorquens).